The chain runs to 258 residues: Acetylglutamate kinase (258 aa).

Substrate is bound by residues 41-42 (GG), Arg63, and Asn156.

Belongs to the acetylglutamate kinase family. ArgB subfamily.

It localises to the cytoplasm. The enzyme catalyses N-acetyl-L-glutamate + ATP = N-acetyl-L-glutamyl 5-phosphate + ADP. It functions in the pathway amino-acid biosynthesis; L-arginine biosynthesis; N(2)-acetyl-L-ornithine from L-glutamate: step 2/4. In terms of biological role, catalyzes the ATP-dependent phosphorylation of N-acetyl-L-glutamate. In Geobacillus kaustophilus (strain HTA426), this protein is Acetylglutamate kinase.